Consider the following 129-residue polypeptide: Glycine cleavage system H protein (129 aa).

Residues 24–106 enclose the Lipoyl-binding domain; sequence LLKIGVSEFA…IGNGWLLIIK (83 aa). An N6-lipoyllysine modification is found at Lys-65.

This sequence belongs to the GcvH family. The glycine cleavage system is composed of four proteins: P, T, L and H. (R)-lipoate is required as a cofactor.

Functionally, the glycine cleavage system catalyzes the degradation of glycine. The H protein shuttles the methylamine group of glycine from the P protein to the T protein. This Prochlorococcus marinus (strain MIT 9515) protein is Glycine cleavage system H protein.